A 162-amino-acid chain; its full sequence is MELKFLGEPCLTTVSEPVSEVDEQLRAFISGMFRVMRGAGGVGLAAPQVGRTVRVFVVDVEHHVRAFINPQITAASEEQSSYEEGCLSIPHIYERVLRPRRVSVQYLDENGKRCAVDADGILARVIQHEYDHLDGILFLDRIDEKRRDDALRRYAALRGTIR.

Cys86 and His128 together coordinate Fe cation. Residue Glu129 is part of the active site. His132 is a Fe cation binding site.

The protein belongs to the polypeptide deformylase family. It depends on Fe(2+) as a cofactor.

The enzyme catalyses N-terminal N-formyl-L-methionyl-[peptide] + H2O = N-terminal L-methionyl-[peptide] + formate. Removes the formyl group from the N-terminal Met of newly synthesized proteins. Requires at least a dipeptide for an efficient rate of reaction. N-terminal L-methionine is a prerequisite for activity but the enzyme has broad specificity at other positions. The chain is Peptide deformylase from Treponema pallidum (strain Nichols).